The sequence spans 655 residues: MRPFARAALCLLAAAGHLAQAQFPPRPEGVTVLESKFGGGARISYKEPGLCETTEGVKSYAGYVHLPPGTLKDLGVEQDYPINTFFWFFEARKDPENAPLSIWMNGGPGSSSMFGMMTENGPCFVNPDSNSTRLNPHSWNNEVNMLYLDQPVQVGLSYDTLANFTRNLVTDEITKLEPGDPIPEQNATFLVGTYASRNMDTTAKGTRNAAIALWHFAQVWFQEFPGYHPRDSRISIATESYGGRYGPAFTAFFEEQNQKIKDGTWNGSEGNRHVLHLDTLMIVNGCIDRLVQWPAYPQMAYNNTYSIEAVNASIHEGMLDALYREGGCRDKINHCRSISAVSDPENIGINAMVNDVCKDAETFCSTEVRDPYQEFSGRNYYDIGQLDPSPFPAPFYMAWLNQPHVQAALGVPLNWTQSNDVVTTAFRAIGDYPRPGWLEDLAYLLENGIKVSLVYGDRDYACNWFGGELSSLAINYTDTQNFHNAGYAGIQVNSSYIGGQVRQYGNLSFSRVYEAGHEVPSYQPETALQIFHRALFNKDIATGTIDTSSRREDGKFYGSSGPSDSFVFKNEPPPQHVHFCHILDTSTCTKEQIESVENGTAVVRSWIVVDSNSTSLFPEVVGSAEPTPMPGAALVSGRIKFHVHVIKSFDYYIFI.

An N-terminal signal peptide occupies residues 1-21; that stretch reads MRPFARAALCLLAAAGHLAQA. C51 and C123 form a disulfide bridge. 3 N-linked (GlcNAc...) asparagine glycosylation sites follow: N130, N163, and N186. Residue S240 is part of the active site. 3 N-linked (GlcNAc...) asparagine glycosylation sites follow: N266, N302, and N311. 2 disulfide bridges follow: C328/C364 and C335/C357. An N-linked (GlcNAc...) asparagine glycan is attached at N414. D459 is a catalytic residue. C462 contributes to the substrate binding site. N-linked (GlcNAc...) asparagine glycans are attached at residues N475, N493, and N506. Residue H517 is part of the active site. Position 518 (E518) interacts with substrate. N-linked (GlcNAc...) asparagine glycans are attached at residues N598 and N612. G631 is lipidated: GPI-anchor amidated glycine. The propeptide at 632-655 is removed in mature form; sequence AALVSGRIKFHVHVIKSFDYYIFI.

Belongs to the peptidase S10 family.

It localises to the cell membrane. It carries out the reaction Preferential release of a C-terminal arginine or lysine residue.. Its function is as follows. Extracellular serine carboxypeptidase that contributes to pathogenicity. The protein is Carboxypeptidase S1 homolog B (SCPB) of Arthroderma otae (strain ATCC MYA-4605 / CBS 113480) (Microsporum canis).